The following is a 252-amino-acid chain: 2-C-methyl-D-erythritol 4-phosphate cytidylyltransferase (252 aa).

Belongs to the IspD/TarI cytidylyltransferase family. IspD subfamily.

The catalysed reaction is 2-C-methyl-D-erythritol 4-phosphate + CTP + H(+) = 4-CDP-2-C-methyl-D-erythritol + diphosphate. Its pathway is isoprenoid biosynthesis; isopentenyl diphosphate biosynthesis via DXP pathway; isopentenyl diphosphate from 1-deoxy-D-xylulose 5-phosphate: step 2/6. Its function is as follows. Catalyzes the formation of 4-diphosphocytidyl-2-C-methyl-D-erythritol from CTP and 2-C-methyl-D-erythritol 4-phosphate (MEP). The sequence is that of 2-C-methyl-D-erythritol 4-phosphate cytidylyltransferase from Chlorobium phaeobacteroides (strain BS1).